Reading from the N-terminus, the 253-residue chain is Prolactin-7A2 (253 aa).

A signal peptide spans 1–30 (MSFSFSQPCPSGALLLVVVSSLLLWENVAS). N-linked (GlcNAc...) asparagine glycosylation is found at asparagine 36, asparagine 103, and asparagine 135. 2 disulfide bridges follow: cysteine 101/cysteine 218 and cysteine 235/cysteine 244.

The protein belongs to the somatotropin/prolactin family. As to expression, expression restricted to the placental tissue. Expressed only in the spongiotrophoblasts.

The protein localises to the secreted. This is Prolactin-7A2 (Prl7a2) from Mus musculus (Mouse).